The chain runs to 383 residues: Succinyl-diaminopimelate desuccinylase (383 aa).

Zn(2+) is bound at residue histidine 74. Residue aspartate 76 is part of the active site. Aspartate 107 is a Zn(2+) binding site. The Proton acceptor role is filled by glutamate 141. The Zn(2+) site is built by glutamate 142, glutamate 170, and histidine 356.

Belongs to the peptidase M20A family. DapE subfamily. As to quaternary structure, homodimer. It depends on Zn(2+) as a cofactor. Co(2+) is required as a cofactor.

The enzyme catalyses N-succinyl-(2S,6S)-2,6-diaminopimelate + H2O = (2S,6S)-2,6-diaminopimelate + succinate. It functions in the pathway amino-acid biosynthesis; L-lysine biosynthesis via DAP pathway; LL-2,6-diaminopimelate from (S)-tetrahydrodipicolinate (succinylase route): step 3/3. Functionally, catalyzes the hydrolysis of N-succinyl-L,L-diaminopimelic acid (SDAP), forming succinate and LL-2,6-diaminopimelate (DAP), an intermediate involved in the bacterial biosynthesis of lysine and meso-diaminopimelic acid, an essential component of bacterial cell walls. The sequence is that of Succinyl-diaminopimelate desuccinylase from Polynucleobacter necessarius subsp. necessarius (strain STIR1).